The sequence spans 766 residues: Polyribonucleotide nucleotidyltransferase (766 aa).

Residues Asp-490 and Asp-496 each contribute to the Mg(2+) site. The 60-residue stretch at 557 to 616 (PKIDTITIPVDKIKVVIGKGGEQIDKIIAETGVKIDIDDEGLCSIFSSDQSAIDRAKEII) folds into the KH domain. Residues 626–694 (GEVYEAKVVR…DKGRVDASMR (69 aa)) enclose the S1 motif domain. Composition is skewed to basic and acidic residues over residues 700-734 (PEGY…DRNN) and 744-766 (FELR…KKPE). Residues 700–766 (PEGYVEPERK…FPELSTKKPE (67 aa)) form a disordered region.

This sequence belongs to the polyribonucleotide nucleotidyltransferase family. Mg(2+) serves as cofactor.

It localises to the cytoplasm. It carries out the reaction RNA(n+1) + phosphate = RNA(n) + a ribonucleoside 5'-diphosphate. Involved in mRNA degradation. Catalyzes the phosphorolysis of single-stranded polyribonucleotides processively in the 3'- to 5'-direction. The protein is Polyribonucleotide nucleotidyltransferase of Lactococcus lactis subsp. cremoris (strain MG1363).